Here is a 545-residue protein sequence, read N- to C-terminus: 2-succinyl-5-enolpyruvyl-6-hydroxy-3-cyclohexene-1-carboxylate synthase (545 aa).

This sequence belongs to the TPP enzyme family. MenD subfamily. Homodimer. The cofactor is Mg(2+). Mn(2+) is required as a cofactor. Requires thiamine diphosphate as cofactor.

The enzyme catalyses isochorismate + 2-oxoglutarate + H(+) = 5-enolpyruvoyl-6-hydroxy-2-succinyl-cyclohex-3-ene-1-carboxylate + CO2. Its pathway is quinol/quinone metabolism; 1,4-dihydroxy-2-naphthoate biosynthesis; 1,4-dihydroxy-2-naphthoate from chorismate: step 2/7. It participates in quinol/quinone metabolism; menaquinone biosynthesis. Functionally, catalyzes the thiamine diphosphate-dependent decarboxylation of 2-oxoglutarate and the subsequent addition of the resulting succinic semialdehyde-thiamine pyrophosphate anion to isochorismate to yield 2-succinyl-5-enolpyruvyl-6-hydroxy-3-cyclohexene-1-carboxylate (SEPHCHC). This is 2-succinyl-5-enolpyruvyl-6-hydroxy-3-cyclohexene-1-carboxylate synthase from Nocardia farcinica (strain IFM 10152).